Consider the following 219-residue polypeptide: MSLGLVGRKVGMTRIFTAEGDSIPVTVLDVSDNRVTQIKTVETDGYTAVQVAFGSRRASRVTKPLAGHLAKAGVQTGEILKEFRIEADKAAELSNGAVIGPDLFEVGQKVDVQGVSIGKGYAGTIKRYNFGSGRASHGNSRSHNVPGSIGMAQDPGRVFPGKRMTGHMGDETVTVQNLEIARIDADRKLLLVKGAVPGAKGGKVFVTPAVKTRAVKGAK.

The interval 133-153 is disordered; it reads GRASHGNSRSHNVPGSIGMAQ. Glutamine 153 carries the post-translational modification N5-methylglutamine.

This sequence belongs to the universal ribosomal protein uL3 family. Part of the 50S ribosomal subunit. Forms a cluster with proteins L14 and L19. Post-translationally, methylated by PrmB.

In terms of biological role, one of the primary rRNA binding proteins, it binds directly near the 3'-end of the 23S rRNA, where it nucleates assembly of the 50S subunit. This chain is Large ribosomal subunit protein uL3, found in Burkholderia thailandensis (strain ATCC 700388 / DSM 13276 / CCUG 48851 / CIP 106301 / E264).